The chain runs to 107 residues: Large ribosomal subunit protein P1 (107 aa).

Residues 68–82 are compositionally biased toward low complexity; it reads PATAGAPAAAGAAAP. A disordered region spans residues 68–107; it reads PATAGAPAAAGAAAPAEEKKEEKEEEKEESDEDMGFGLFD. Over residues 90–101 the composition is skewed to acidic residues; the sequence is KEEEKEESDEDM.

Belongs to the eukaryotic ribosomal protein P1/P2 family. As to quaternary structure, P1 and P2 exist as dimers at the large ribosomal subunit.

It is found in the cytoplasm. Functionally, plays an important role in the elongation step of protein synthesis. This is Large ribosomal subunit protein P1 from Penicillium brevicompactum.